A 254-amino-acid chain; its full sequence is Small ribosomal subunit protein uS2 (254 aa).

The segment at 225–254 (ALSERKREKDDAKLKEDEESKKASDKAEIQ) is disordered. The segment covering 226–254 (LSERKREKDDAKLKEDEESKKASDKAEIQ) has biased composition (basic and acidic residues).

Belongs to the universal ribosomal protein uS2 family.

The chain is Small ribosomal subunit protein uS2 from Cytophaga hutchinsonii (strain ATCC 33406 / DSM 1761 / CIP 103989 / NBRC 15051 / NCIMB 9469 / D465).